We begin with the raw amino-acid sequence, 349 residues long: Isopentenyl-diphosphate delta-isomerase (349 aa).

6–7 provides a ligand contact to substrate; the sequence is RK. FMN is bound by residues 62-64, S93, and N122; that span reads AMT. Q152 lines the substrate pocket. E153 lines the Mg(2+) pocket. FMN-binding positions include K184, T214, 258 to 259, and 280 to 281; these read GG and AG.

The protein belongs to the IPP isomerase type 2 family. As to quaternary structure, homooctamer. Dimer of tetramers. FMN is required as a cofactor. Requires NADPH as cofactor. It depends on Mg(2+) as a cofactor.

The protein localises to the cytoplasm. It carries out the reaction isopentenyl diphosphate = dimethylallyl diphosphate. Involved in the biosynthesis of isoprenoids. Catalyzes the 1,3-allylic rearrangement of the homoallylic substrate isopentenyl (IPP) to its allylic isomer, dimethylallyl diphosphate (DMAPP). This Bacillus cereus (strain B4264) protein is Isopentenyl-diphosphate delta-isomerase.